The chain runs to 234 residues: Sugar fermentation stimulation protein homolog (234 aa).

It belongs to the SfsA family.

The polypeptide is Sugar fermentation stimulation protein homolog (Pseudoalteromonas atlantica (strain T6c / ATCC BAA-1087)).